The primary structure comprises 413 residues: Short-chain specific acyl-CoA dehydrogenase, mitochondrial (413 aa).

A mitochondrion-targeting transit peptide spans 1 to 24 (MAAALLARACGPVRGALWPRDCRR). Residue T27 is modified to Phosphothreonine. Position 51 is an N6-acetyllysine; alternate (K51). N6-succinyllysine; alternate is present on K51. K72 is modified (N6-acetyllysine). Position 129 is an N6-acetyllysine; alternate (K129). K129 carries the post-translational modification N6-succinyllysine; alternate. FAD is bound by residues 152 to 161 (FALSEPGNGS) and 185 to 187 (WIT). S161 is a binding site for substrate. K208 carries the N6-acetyllysine modification. K262 carries the post-translational modification N6-acetyllysine; alternate. At K262 the chain carries N6-succinyllysine; alternate. Residue 269–272 (DMGR) coordinates substrate. An FAD-binding site is contributed by R297. Position 306 is an N6-acetyllysine; alternate (K306). K306 bears the N6-succinyllysine; alternate mark. FAD contacts are provided by residues Q308 and 366–370 (QILGG). Catalysis depends on E393, which acts as the Proton acceptor. Residue G394 coordinates substrate. 395–397 (TSE) serves as a coordination point for FAD.

It belongs to the acyl-CoA dehydrogenase family. In terms of assembly, homotetramer. Requires FAD as cofactor.

It is found in the mitochondrion matrix. The enzyme catalyses a short-chain 2,3-saturated fatty acyl-CoA + oxidized [electron-transfer flavoprotein] + H(+) = a short-chain (2E)-enoyl-CoA + reduced [electron-transfer flavoprotein]. It carries out the reaction butanoyl-CoA + oxidized [electron-transfer flavoprotein] + H(+) = (2E)-butenoyl-CoA + reduced [electron-transfer flavoprotein]. It catalyses the reaction pentanoyl-CoA + oxidized [electron-transfer flavoprotein] + H(+) = (2E)-pentenoyl-CoA + reduced [electron-transfer flavoprotein]. The catalysed reaction is hexanoyl-CoA + oxidized [electron-transfer flavoprotein] + H(+) = (2E)-hexenoyl-CoA + reduced [electron-transfer flavoprotein]. The protein operates within lipid metabolism; mitochondrial fatty acid beta-oxidation. Functionally, short-chain specific acyl-CoA dehydrogenase is one of the acyl-CoA dehydrogenases that catalyze the first step of mitochondrial fatty acid beta-oxidation, an aerobic process breaking down fatty acids into acetyl-CoA and allowing the production of energy from fats. The first step of fatty acid beta-oxidation consists in the removal of one hydrogen from C-2 and C-3 of the straight-chain fatty acyl-CoA thioester, resulting in the formation of trans-2-enoyl-CoA. Among the different mitochondrial acyl-CoA dehydrogenases, short-chain specific acyl-CoA dehydrogenase acts specifically on acyl-CoAs with saturated 4 to 6 carbons long primary chains. This Sus scrofa (Pig) protein is Short-chain specific acyl-CoA dehydrogenase, mitochondrial (ACADS).